The following is a 25-amino-acid chain: Pregnancy-associated glycoprotein 59g (25 aa).

The N-linked (GlcNAc...) asparagine glycan is linked to N4.

This sequence belongs to the peptidase A1 family. Highly expressed in the placenta between day 60 and day 100 of gestation.

The protein localises to the secreted. The protein resides in the extracellular space. The sequence is that of Pregnancy-associated glycoprotein 59g from Ovis aries (Sheep).